A 493-amino-acid polypeptide reads, in one-letter code: Glutamyl-tRNA(Gln) amidotransferase subunit A (493 aa).

Residues Lys81 and Ser156 each act as charge relay system in the active site. Catalysis depends on Ser180, which acts as the Acyl-ester intermediate.

The protein belongs to the amidase family. GatA subfamily. Heterotrimer of A, B and C subunits.

It catalyses the reaction L-glutamyl-tRNA(Gln) + L-glutamine + ATP + H2O = L-glutaminyl-tRNA(Gln) + L-glutamate + ADP + phosphate + H(+). In terms of biological role, allows the formation of correctly charged Gln-tRNA(Gln) through the transamidation of misacylated Glu-tRNA(Gln) in organisms which lack glutaminyl-tRNA synthetase. The reaction takes place in the presence of glutamine and ATP through an activated gamma-phospho-Glu-tRNA(Gln). The polypeptide is Glutamyl-tRNA(Gln) amidotransferase subunit A (Mycobacterium ulcerans (strain Agy99)).